A 163-amino-acid polypeptide reads, in one-letter code: Halocyanin (163 aa).

An N-terminal signal peptide occupies residues 1–24; sequence MKDISRRRFVLGTGATVAAATLAG. C25 is subject to N-acetylcysteine. C25 is lipidated: S-archaeol cysteine. A compositionally biased stretch (gly residues) spans 26-38; the sequence is NGNGNGNGNGNGN. The tract at residues 26–48 is disordered; that stretch reads NGNGNGNGNGNGNGEPDTPEGRA. Residues 48–163 enclose the Plastocyanin-like domain; the sequence is ADQFLTDNDA…QGMYGAVIVE (116 aa). 4 residues coordinate Cu cation: H110, C148, H151, and M156.

It localises to the cell membrane. Electron donor. Binds one copper ion. The sequence is that of Halocyanin (hcy) from Natronomonas pharaonis (Natronobacterium pharaonis).